Reading from the N-terminus, the 277-residue chain is Large ribosomal subunit protein uL2 (277 aa).

Residues 219–277 (TVRGSVMNPNDHPHGGGEGKAPVGRKAPSTPWGKPALGLKTRNKKAKSDKLIVRRRNQK) are disordered.

The protein belongs to the universal ribosomal protein uL2 family. In terms of assembly, part of the 50S ribosomal subunit. Forms a bridge to the 30S subunit in the 70S ribosome.

Its function is as follows. One of the primary rRNA binding proteins. Required for association of the 30S and 50S subunits to form the 70S ribosome, for tRNA binding and peptide bond formation. It has been suggested to have peptidyltransferase activity; this is somewhat controversial. Makes several contacts with the 16S rRNA in the 70S ribosome. The chain is Large ribosomal subunit protein uL2 from Streptococcus suis (strain 98HAH33).